The following is a 260-amino-acid chain: Tropinone reductase 2 (260 aa).

13-37 (LVTGGSRGIGYGIVEELANLGASVY) lines the NADP(+) pocket. Ser-146 is a binding site for substrate. Tyr-159 functions as the Proton acceptor in the catalytic mechanism.

The protein belongs to the short-chain dehydrogenases/reductases (SDR) family.

The enzyme catalyses pseudotropine + NADP(+) = tropinone + NADPH + H(+). It participates in alkaloid biosynthesis; tropane alkaloid biosynthesis. Its function is as follows. Catalyzes the stereospecific reduction of tropinone to pseudotropine. In Hyoscyamus niger (Black henbane), this protein is Tropinone reductase 2 (TR2).